We begin with the raw amino-acid sequence, 449 residues long: UNC93-like protein MFSD11 (449 aa).

A helical membrane pass occupies residues 8–28 (LFNIIILGVAFMFMFTAFQTC). N-linked (GlcNAc...) asparagine glycosylation occurs at Asn-40. 5 helical membrane passes run 53–73 (AIIYGVFSASNLITPSVVAIV), 74–94 (GPQLSMFASGLFYSMYIAVFI), 96–116 (PFPWSFYTASVFIGIAAAVLW), 138–158 (IFWALLQSSLFFGNLYIYFAW), and 170–190 (RTVFIALTVISLVGTVLFFLI). Ser-204 carries the phosphoserine modification. Transmembrane regions (helical) follow at residues 239–259 (MLLLSITTAYTGLELTFFSGV), 277–297 (LIGLSGIFIGIGEILGGSLFG), 309–329 (PVVLLGILVHFIAFYLIFLNM), 359–379 (FLLGLGDSCFNTQLLSILGFL), 385–405 (APAFAIFKFVQSICAAVAFFY), and 410–430 (LLHWQLLVMVIFGFFGTISFF).

The protein belongs to the unc-93 family.

It localises to the membrane. This chain is UNC93-like protein MFSD11 (MFSD11), found in Homo sapiens (Human).